A 519-amino-acid chain; its full sequence is uncharacterized protein (519 aa).

The next 4 helical transmembrane spans lie at 141-161 (GSSL…ANVF), 202-222 (LGET…WALA), 385-405 (FVVR…PFVG), and 433-453 (TVVP…AELV).

It is found in the cell membrane. This is an uncharacterized protein from Sinorhizobium fredii (strain NBRC 101917 / NGR234).